Consider the following 172-residue polypeptide: Putative defense protein (172 aa).

The first 21 residues, 1 to 21 (MKLVVAAVLAMAASRWRRLSA), serve as a signal peptide directing secretion. Positions 22–172 (HGQVPSSTCA…LRQLDNAVAA (151 aa)) constitute a Reelin domain.

Belongs to the insect defense protein family. As to expression, in adults, in hemolymph.

It localises to the secreted. In terms of biological role, may have antimicrobial activity. This chain is Putative defense protein, found in Locusta migratoria (Migratory locust).